Reading from the N-terminus, the 269-residue chain is Ribonuclease HII (269 aa).

One can recognise an RNase H type-2 domain in the interval 28 to 222 (RHVAGADEAG…VSGRRGAPPR (195 aa)). Positions 34, 35, and 128 each coordinate a divalent metal cation.

It belongs to the RNase HII family. Mn(2+) is required as a cofactor. Requires Mg(2+) as cofactor.

It localises to the cytoplasm. It catalyses the reaction Endonucleolytic cleavage to 5'-phosphomonoester.. In terms of biological role, endonuclease that specifically degrades the RNA of RNA-DNA hybrids. In Salinispora arenicola (strain CNS-205), this protein is Ribonuclease HII.